A 444-amino-acid chain; its full sequence is Orexin receptor type 2 (444 aa).

Positions 1-10 (MSGTKLEDSP) are enriched in basic and acidic residues. The interval 1 to 30 (MSGTKLEDSPPCRNWSSAPELNETQEPFLN) is disordered. The Extracellular portion of the chain corresponds to 1 to 54 (MSGTKLEDSPPCRNWSSAPELNETQEPFLNPTDYDDEEFLRYLWREYLHPKEYE). Residues Asn-14 and Asn-22 are each glycosylated (N-linked (GlcNAc...) asparagine). Positions 14–27 (NWSSAPELNETQEP) are enriched in polar residues. The segment at 33 to 49 (DYDDEEFLRYLWREYLH) is required for response to orexin-A. The helical transmembrane segment at 55-75 (WVLIAGYIIVFVVALVGNVLV) threads the bilayer. The Cytoplasmic segment spans residues 76-88 (CVAVWKNHHMRTV). A helical transmembrane segment spans residues 89-110 (TNYFIVNLSLADVLVTITCLPA). Residues 111–127 (TLVVDITETWFFGQSLC) are Extracellular-facing. Cys-127 and Cys-210 are disulfide-bonded. A helical transmembrane segment spans residues 128-150 (KVIPYLQTVSVSVSVLTLSCIAL). Topologically, residues 151-170 (DRWYAICHPLMFKSTAKRAR) are cytoplasmic. A helical membrane pass occupies residues 171-191 (NSIVIIWIVSCIIMIPQAIVM). At 192 to 222 (ECSTMLPGLANKTTLFTVCDERWGGEIYPKM) the chain is on the extracellular side. N-linked (GlcNAc...) asparagine glycosylation is present at Asn-202. The chain crosses the membrane as a helical span at residues 223–243 (YHICFFLVTYMAPLCLMVLAY). The Cytoplasmic portion of the chain corresponds to 244–304 (LQIFRKLWCR…QIRARRKTAR (61 aa)). Residues 305-326 (MLMVVLLVFAICYLPISILNVL) traverse the membrane as a helical segment. At 327–342 (KRVFGMFTHTEDRETV) the chain is on the extracellular side. The chain crosses the membrane as a helical span at residues 343–366 (YAWFTFSHWLVYANSAANPIIYNF). The Cytoplasmic portion of the chain corresponds to 367–444 (LSGKFREEFK…ANGAGPLQNW (78 aa)).

It belongs to the G-protein coupled receptor 1 family.

Its subcellular location is the cell membrane. Functionally, nonselective, high-affinity receptor for both orexin-A and orexin-B neuropeptides. Triggers an increase in cytoplasmic Ca(2+) levels in response to orexin-A binding. The polypeptide is Orexin receptor type 2 (HCRTR2) (Canis lupus familiaris (Dog)).